The chain runs to 558 residues: uncharacterized protein (558 aa).

Positions 47 to 78 (DFDDLNSIFKDFQKQKKNLKDNILKFYNKKKE) form a coiled coil. Disordered regions lie at residues 239–266 (NNNN…SKIE) and 424–447 (NNNN…NSGE). Basic and acidic residues predominate over residues 245–266 (TETESEIESKSESESESESKIE). Residues 424–444 (NNNNNNNNNNNNNNNNNNNNN) are compositionally biased toward low complexity.

This is an uncharacterized protein from Dictyostelium discoideum (Social amoeba).